Here is a 465-residue protein sequence, read N- to C-terminus: Hexokinase type 1 (465 aa).

One can recognise a Hexokinase domain in the interval 8–447 (EEDFPEVYKV…CGVGAAIMAG (440 aa)). Positions 65 to 197 (TGRERGQFLA…EISVDVMGII (133 aa)) are hexokinase small subdomain. Lys-88 lines the ATP pocket. The glucose-binding stretch occupies residues 139 to 165 (PLGIAFAFTLKKLALDVGILVSWTKEF). A hexokinase large subdomain region spans residues 198 to 436 (NVGAGSLLAL…YNFEFVITQD (239 aa)).

This sequence belongs to the hexokinase family.

The catalysed reaction is a D-hexose + ATP = a D-hexose 6-phosphate + ADP + H(+). The enzyme catalyses D-mannose + ATP = D-mannose 6-phosphate + ADP + H(+). It carries out the reaction D-fructose + ATP = D-fructose 6-phosphate + ADP + H(+). It catalyses the reaction D-glucose + ATP = D-glucose 6-phosphate + ADP + H(+). Its pathway is carbohydrate metabolism; hexose metabolism. The protein operates within carbohydrate degradation; glycolysis; D-glyceraldehyde 3-phosphate and glycerone phosphate from D-glucose: step 1/4. Functionally, catalyzes the phosphorylation of various hexoses to hexose 6-phosphate. This chain is Hexokinase type 1 (Hex-t1), found in Drosophila melanogaster (Fruit fly).